The primary structure comprises 261 residues: MQPLLLLLTFILLQGDEAGKIIGGREARPHSYPYMAFLLIQSPEGLSACGGFLVREDFVLTAAHCLGSSINVTLGAHNIQMRERTQQLITVLRAIRHPDYNPQNIRNDIMLLQLRRRARRSGSVKPVALPQASKKLQPGDLCTVAGWGRVSQSRGTNVLQEVQLRVQMDQMCANRFQFYNSQTQICVGNPRERKSAFRGDSGGPLVCSNVAQGIVSYGSNNGNPPAVFTKIQSFMPWIKRTMRRFAPRYQRPANSLSQAQT.

Residues 1–18 form the signal peptide; that stretch reads MQPLLLLLTFILLQGDEA. A propeptide spans 19-20 (activation peptide); the sequence is GK. The important for antimicrobial activity stretch occupies residues 21–25; the sequence is IIGGR. The Peptidase S1 domain maps to 21–243; the sequence is IIGGREARPH…FMPWIKRTMR (223 aa). The cysteines at positions 49 and 65 are disulfide-linked. His-64 serves as the catalytic Charge relay system. Asn-71 carries an N-linked (GlcNAc...) asparagine glycan. The tract at residues 97–111 is important for antimicrobial activity; sequence HPDYNPQNIRNDIML. The active-site Charge relay system is Asp-108. 2 disulfides stabilise this stretch: Cys-142-Cys-207 and Cys-172-Cys-186. Ser-201 acts as the Charge relay system in catalysis.

The protein belongs to the peptidase S1 family. In terms of tissue distribution, in adult, detected only in bone marrow where expression is restricted to a small population of early myeloid cells.

It localises to the cell membrane. The protein resides in the cytoplasmic granule. It is found in the secreted. The protein localises to the cytoplasm. Its subcellular location is the cytosol. It localises to the lysosome. The protein resides in the nucleus. It carries out the reaction Specificity similar to chymotrypsin C.. With respect to regulation, inhibited by chymostatin, phenylmethanesulfonyl fluoride and diisopropyl fluorophosphate. Serine protease with trypsin- and chymotrypsin-like specificity. Also displays antibacterial activity against Gram-negative and Gram-positive bacteria independent of its protease activity. Prefers Phe and Tyr residues in the P1 position of substrates but also cleaves efficiently after Trp and Leu. Shows a preference for negatively charged amino acids in the P2' position and for aliphatic amino acids both upstream and downstream of the cleavage site. Required for recruitment and activation of platelets which is mediated by the F2RL3/PAR4 platelet receptor. Binds reversibly to and stimulates B cells and CD4(+) and CD8(+) T cells. Also binds reversibly to natural killer (NK) cells and enhances NK cell cytotoxicity through its protease activity. Cleaves complement C3. Cleaves vimentin. Cleaves thrombin receptor F2R/PAR1. Cleaves the synovial mucin-type protein PRG4/lubricin. Cleaves and activates IL36G which promotes expression of chemokines CXCL1 and CXLC8 in keratinocytes. Cleaves IL33 into mature forms which have greater activity than the unprocessed form. Cleaves coagulation factor F8 to produce a partially activated form. Also cleaves and activates coagulation factor F10. Cleaves leukocyte cell surface protein SPN/CD43 to release its extracellular domain and trigger its intramembrane proteolysis by gamma-secretase, releasing the CD43 cytoplasmic tail chain (CD43-ct) which translocates to the nucleus. During apoptosis, cleaves SMARCA2/BRM to produce a 160 kDa cleavage product which localizes to the cytosol. Cleaves MBP in B cell lysosomes at '221-Phe-|-Lys-222', degrading the major immunogenic MBP epitope and preventing the activation of MBP-specific autoreactive T cells. Cleaves annexin ANXA1 and antimicrobial peptide CAMP to produce peptides which act on neutrophil N-formyl peptide receptors to enhance the release of CXCL2. Acts as a ligand for the N-formyl peptide receptor FPR1, enhancing phagocyte chemotaxis. Has antibacterial activity against the Gram-negative bacteria N.gonorrhoeae and P.aeruginosa. Likely to act against N.gonorrhoeae by interacting with N.gonorrhoeae penA/PBP2. Exhibits potent antimicrobial activity against the Gram-positive bacterium L.monocytogenes. Has antibacterial activity against the Gram-positive bacterium S.aureus and degrades S.aureus biofilms, allowing polymorphonuclear leukocytes to penetrate the biofilm and phagocytose bacteria. Has antibacterial activity against M.tuberculosis. Induces platelet aggregation which is strongly potentiated in the presence of ELANE. This chain is Cathepsin G (Ctsg), found in Mus musculus (Mouse).